Here is a 306-residue protein sequence, read N- to C-terminus: Fe-S cluster assembly protein dre2 (306 aa).

The segment at 21 to 150 is N-terminal SAM-like domain; the sequence is NVTQKRSLLL…EKPQYQEAAV (130 aa). Residues 151 to 196 form a linker region; it reads PLRFGANKRKNKISPEPVKIESVGFVDNYDDDELINEDDLLDEEDL. [2Fe-2S] cluster is bound by residues Cys-206, Cys-218, Cys-221, and Cys-223. Positions 206 to 223 are fe-S binding site A; it reads CQPETAKKRRRACKDCTC. The [4Fe-4S] cluster site is built by Cys-269, Cys-272, Cys-280, and Cys-283. 2 consecutive short sequence motifs (cx2C motif) follow at residues 269–272 and 280–283; these read CNSC and CASC. Residues 269 to 283 form a fe-S binding site B region; that stretch reads CNSCSLGDAFRCASC.

Belongs to the anamorsin family. Monomer. Interacts with tah18. Interacts with mia40. [2Fe-2S] cluster serves as cofactor. [4Fe-4S] cluster is required as a cofactor.

The protein resides in the cytoplasm. It is found in the mitochondrion intermembrane space. Its function is as follows. Component of the cytosolic iron-sulfur (Fe-S) protein assembly (CIA) machinery required for the maturation of extramitochondrial Fe-S proteins. Part of an electron transfer chain functioning in an early step of cytosolic Fe-S biogenesis, facilitating the de novo assembly of a [4Fe-4S] cluster on the scaffold complex cfd1-nbp35. Electrons are transferred to dre2 from NADPH via the FAD- and FMN-containing protein tah18. Tah18-dre2 are also required for the assembly of the diferric tyrosyl radical cofactor of ribonucleotide reductase (RNR), probably by providing electrons for reduction during radical cofactor maturation in the catalytic small subunit rnr2. The chain is Fe-S cluster assembly protein dre2 from Talaromyces stipitatus (strain ATCC 10500 / CBS 375.48 / QM 6759 / NRRL 1006) (Penicillium stipitatum).